A 235-amino-acid chain; its full sequence is Large ribosomal subunit protein uL1 (235 aa).

This sequence belongs to the universal ribosomal protein uL1 family. In terms of assembly, part of the 50S ribosomal subunit.

Binds directly to 23S rRNA. The L1 stalk is quite mobile in the ribosome, and is involved in E site tRNA release. Functionally, protein L1 is also a translational repressor protein, it controls the translation of the L11 operon by binding to its mRNA. This is Large ribosomal subunit protein uL1 from Thermobifida fusca (strain YX).